Consider the following 242-residue polypeptide: Biosynthetic peptidoglycan transglycosylase (242 aa).

The chain crosses the membrane as a helical span at residues 19-39 (LLLACAVLWGGGVALFSIVPV).

This sequence belongs to the glycosyltransferase 51 family.

It localises to the cell inner membrane. It carries out the reaction [GlcNAc-(1-&gt;4)-Mur2Ac(oyl-L-Ala-gamma-D-Glu-L-Lys-D-Ala-D-Ala)](n)-di-trans,octa-cis-undecaprenyl diphosphate + beta-D-GlcNAc-(1-&gt;4)-Mur2Ac(oyl-L-Ala-gamma-D-Glu-L-Lys-D-Ala-D-Ala)-di-trans,octa-cis-undecaprenyl diphosphate = [GlcNAc-(1-&gt;4)-Mur2Ac(oyl-L-Ala-gamma-D-Glu-L-Lys-D-Ala-D-Ala)](n+1)-di-trans,octa-cis-undecaprenyl diphosphate + di-trans,octa-cis-undecaprenyl diphosphate + H(+). The protein operates within cell wall biogenesis; peptidoglycan biosynthesis. In terms of biological role, peptidoglycan polymerase that catalyzes glycan chain elongation from lipid-linked precursors. This Klebsiella oxytoca protein is Biosynthetic peptidoglycan transglycosylase.